The primary structure comprises 543 residues: ATP synthase subunit alpha (543 aa).

Gly-174–Thr-181 is a binding site for ATP.

Belongs to the ATPase alpha/beta chains family. F-type ATPases have 2 components, CF(1) - the catalytic core - and CF(0) - the membrane proton channel. CF(1) has five subunits: alpha(3), beta(3), gamma(1), delta(1), epsilon(1). CF(0) has three main subunits: a(1), b(2) and c(9-12). The alpha and beta chains form an alternating ring which encloses part of the gamma chain. CF(1) is attached to CF(0) by a central stalk formed by the gamma and epsilon chains, while a peripheral stalk is formed by the delta and b chains.

The protein resides in the cell membrane. It catalyses the reaction ATP + H2O + 4 H(+)(in) = ADP + phosphate + 5 H(+)(out). In terms of biological role, produces ATP from ADP in the presence of a proton gradient across the membrane. The alpha chain is a regulatory subunit. In Bifidobacterium longum subsp. infantis (strain ATCC 15697 / DSM 20088 / JCM 1222 / NCTC 11817 / S12), this protein is ATP synthase subunit alpha.